The sequence spans 333 residues: Ketol-acid reductoisomerase (NADP(+)) (333 aa).

The region spanning 2 to 182 is the KARI N-terminal Rossmann domain; sequence AKIFYDSDCN…GASRAGIILT (181 aa). NADP(+)-binding positions include 25–28, Ser-51, Ser-53, and 83–86; these read FGSQ and DEKQ. His-108 is an active-site residue. Gly-134 contributes to the NADP(+) binding site. The 146-residue stretch at 183–328 folds into the KARI C-terminal knotted domain; sequence TFKEETETDL…KELRKMMPWI (146 aa). Residues Asp-191, Glu-195, Glu-227, and Glu-231 each contribute to the Mg(2+) site. Ser-252 is a substrate binding site.

This sequence belongs to the ketol-acid reductoisomerase family. Requires Mg(2+) as cofactor.

It carries out the reaction (2R)-2,3-dihydroxy-3-methylbutanoate + NADP(+) = (2S)-2-acetolactate + NADPH + H(+). The enzyme catalyses (2R,3R)-2,3-dihydroxy-3-methylpentanoate + NADP(+) = (S)-2-ethyl-2-hydroxy-3-oxobutanoate + NADPH + H(+). The protein operates within amino-acid biosynthesis; L-isoleucine biosynthesis; L-isoleucine from 2-oxobutanoate: step 2/4. It participates in amino-acid biosynthesis; L-valine biosynthesis; L-valine from pyruvate: step 2/4. In terms of biological role, involved in the biosynthesis of branched-chain amino acids (BCAA). Catalyzes an alkyl-migration followed by a ketol-acid reduction of (S)-2-acetolactate (S2AL) to yield (R)-2,3-dihydroxy-isovalerate. In the isomerase reaction, S2AL is rearranged via a Mg-dependent methyl migration to produce 3-hydroxy-3-methyl-2-ketobutyrate (HMKB). In the reductase reaction, this 2-ketoacid undergoes a metal-dependent reduction by NADPH to yield (R)-2,3-dihydroxy-isovalerate. The sequence is that of Ketol-acid reductoisomerase (NADP(+)) from Caldicellulosiruptor bescii (strain ATCC BAA-1888 / DSM 6725 / KCTC 15123 / Z-1320) (Anaerocellum thermophilum).